The following is a 136-amino-acid chain: ATP synthase F(0) complex subunit C1, mitochondrial (136 aa).

Residues 1–61 constitute a mitochondrion transit peptide; sequence MQTTGALLIS…REFQTSVVSR (61 aa). The helical transmembrane segment at 77–97 threads the bilayer; sequence VGVAGSGAGIGTVFGSLIIGY. An N6,N6,N6-trimethyllysine modification is found at Lys-104. Residues 112–132 form a helical membrane-spanning segment; sequence ILGFALFEAMGLFCLMVAFLI.

It belongs to the ATPase C chain family. In terms of assembly, homooctamer; the c-ring consists of eight c subunits forming a circle, and each subunit adopts a hairpin shape. Component of the ATP synthase complex composed at least of ATP5F1A/subunit alpha, ATP5F1B/subunit beta, ATP5MC1/subunit c (homooctomer), MT-ATP6/subunit a, MT-ATP8/subunit 8, ATP5ME/subunit e, ATP5MF/subunit f, ATP5MG/subunit g, ATP5MK/subunit k, ATP5MJ/subunit j, ATP5F1C/subunit gamma, ATP5F1D/subunit delta, ATP5F1E/subunit epsilon, ATP5PF/subunit F6, ATP5PB/subunit b, ATP5PD/subunit d, ATP5PO/subunit OSCP. ATP synthase complex consists of a soluble F(1) head domain (subunits alpha(3) and beta(3)) - the catalytic core - and a membrane F(0) domain - the membrane proton channel (subunits c, a, 8, e, f, g, k and j). These two domains are linked by a central stalk (subunits gamma, delta, and epsilon) rotating inside the F1 region and a stationary peripheral stalk (subunits F6, b, d, and OSCP). Interacts with TMEM70 (homooligomer form); this interaction facilitates the oligomer formation of subunit c/ATP5MC1 (c-ring) and the c-ring membrane insertion and also protects ATP5MC1 against intramitochondrial proteolysis. Post-translationally, trimethylated by ATPSCKMT at Lys-104. Methylation is required for proper incorporation of the C subunit into the ATP synthase complex and mitochondrial respiration.

The protein localises to the mitochondrion membrane. It carries out the reaction H(+)(in) = H(+)(out). In terms of biological role, subunit c, of the mitochondrial membrane ATP synthase complex (F(1)F(0) ATP synthase or Complex V) that produces ATP from ADP in the presence of a proton gradient across the membrane which is generated by electron transport complexes of the respiratory chain. ATP synthase complex consist of a soluble F(1) head domain - the catalytic core - and a membrane F(1) domain - the membrane proton channel. These two domains are linked by a central stalk rotating inside the F(1) region and a stationary peripheral stalk. During catalysis, ATP synthesis in the catalytic domain of F(1) is coupled via a rotary mechanism of the central stalk subunits to proton translocation. With the subunit a (MT-ATP6), forms the proton-conducting channel in the F(0) domain, that contains two crucial half-channels (inlet and outlet) that facilitate proton movement from the mitochondrial intermembrane space (IMS) into the matrix. Protons are taken up via the inlet half-channel and released through the outlet half-channel, following a Grotthuss mechanism. In Sus scrofa (Pig), this protein is ATP synthase F(0) complex subunit C1, mitochondrial.